Reading from the N-terminus, the 122-residue chain is Large ribosomal subunit protein uL14 (122 aa).

This sequence belongs to the universal ribosomal protein uL14 family. Part of the 50S ribosomal subunit. Forms a cluster with proteins L3 and L19. In the 70S ribosome, L14 and L19 interact and together make contacts with the 16S rRNA in bridges B5 and B8.

Functionally, binds to 23S rRNA. Forms part of two intersubunit bridges in the 70S ribosome. The polypeptide is Large ribosomal subunit protein uL14 (Acidothermus cellulolyticus (strain ATCC 43068 / DSM 8971 / 11B)).